The following is a 618-amino-acid chain: Dihydroxy-acid dehydratase (618 aa).

Position 81 (aspartate 81) interacts with Mg(2+). [2Fe-2S] cluster is bound at residue cysteine 122. Mg(2+)-binding residues include aspartate 123 and lysine 124. An N6-carboxylysine modification is found at lysine 124. Residue cysteine 195 coordinates [2Fe-2S] cluster. Glutamate 491 provides a ligand contact to Mg(2+). The Proton acceptor role is filled by serine 517.

Belongs to the IlvD/Edd family. As to quaternary structure, homodimer. [2Fe-2S] cluster is required as a cofactor. It depends on Mg(2+) as a cofactor.

It carries out the reaction (2R)-2,3-dihydroxy-3-methylbutanoate = 3-methyl-2-oxobutanoate + H2O. The enzyme catalyses (2R,3R)-2,3-dihydroxy-3-methylpentanoate = (S)-3-methyl-2-oxopentanoate + H2O. It participates in amino-acid biosynthesis; L-isoleucine biosynthesis; L-isoleucine from 2-oxobutanoate: step 3/4. It functions in the pathway amino-acid biosynthesis; L-valine biosynthesis; L-valine from pyruvate: step 3/4. In terms of biological role, functions in the biosynthesis of branched-chain amino acids. Catalyzes the dehydration of (2R,3R)-2,3-dihydroxy-3-methylpentanoate (2,3-dihydroxy-3-methylvalerate) into 2-oxo-3-methylpentanoate (2-oxo-3-methylvalerate) and of (2R)-2,3-dihydroxy-3-methylbutanoate (2,3-dihydroxyisovalerate) into 2-oxo-3-methylbutanoate (2-oxoisovalerate), the penultimate precursor to L-isoleucine and L-valine, respectively. The polypeptide is Dihydroxy-acid dehydratase (Rhodopseudomonas palustris (strain TIE-1)).